The sequence spans 62 residues: Large ribosomal subunit protein uL29 (62 aa).

Belongs to the universal ribosomal protein uL29 family.

This is Large ribosomal subunit protein uL29 from Vesicomyosocius okutanii subsp. Calyptogena okutanii (strain HA).